The chain runs to 176 residues: MDLPGPIHDFLLVFLGSGLILGSIGVVLFPNPIYSAFSLGLVLVCISLFYILSNSYFVAAAQLLIYVGAINVLILFAVMFLNGSEYSNDFPLWTLGDGITSQVCISLFISLISTILDTSWYGIIWTTRSNQIIEQDLISNSQQIGIHLSTDFFLPFELISIILLVALIGAIVIARQ.

The next 5 helical transmembrane spans lie at 10 to 30, 32 to 52, 61 to 81, 105 to 125, and 153 to 173; these read FLLV…VLFP, PIYS…FYIL, AQLL…VMFL, ISLF…GIIW, and FLPF…AIVI.

It belongs to the complex I subunit 6 family. As to quaternary structure, NDH is composed of at least 16 different subunits, 5 of which are encoded in the nucleus.

The protein localises to the plastid. Its subcellular location is the chloroplast thylakoid membrane. It carries out the reaction a plastoquinone + NADH + (n+1) H(+)(in) = a plastoquinol + NAD(+) + n H(+)(out). The enzyme catalyses a plastoquinone + NADPH + (n+1) H(+)(in) = a plastoquinol + NADP(+) + n H(+)(out). NDH shuttles electrons from NAD(P)H:plastoquinone, via FMN and iron-sulfur (Fe-S) centers, to quinones in the photosynthetic chain and possibly in a chloroplast respiratory chain. The immediate electron acceptor for the enzyme in this species is believed to be plastoquinone. Couples the redox reaction to proton translocation, and thus conserves the redox energy in a proton gradient. The chain is NAD(P)H-quinone oxidoreductase subunit 6, chloroplastic (ndhG) from Ipomoea purpurea (Common morning glory).